Reading from the N-terminus, the 264-residue chain is uncharacterized protein (264 aa).

Positions 7, 9, 102, 138, 163, and 213 each coordinate a divalent metal cation.

It belongs to the metallo-dependent hydrolases superfamily. TatD-type hydrolase family. A divalent metal cation is required as a cofactor.

This is an uncharacterized protein from Buchnera aphidicola subsp. Acyrthosiphon pisum (strain APS) (Acyrthosiphon pisum symbiotic bacterium).